Reading from the N-terminus, the 267-residue chain is UPF0162 protein HI_1558 (267 aa).

This sequence belongs to the UPF0162 family.

The sequence is that of UPF0162 protein HI_1558 from Haemophilus influenzae (strain ATCC 51907 / DSM 11121 / KW20 / Rd).